The primary structure comprises 332 residues: Ectoine dioxygenase (332 aa).

Residues 1 to 10 show a composition bias toward polar residues; sequence MSVQTSSNRP. The tract at residues 1 to 47 is disordered; that stretch reads MSVQTSSNRPLPQANLHIATETPEADSRIRSAPRPGQDPYPTRLSEP. Glutamine 163 provides a ligand contact to L-ectoine. Residue lysine 169 participates in 2-oxoglutarate binding. Residues histidine 180, aspartate 182, and histidine 281 each coordinate Fe cation.

This sequence belongs to the PhyH family. EctD subfamily. In terms of assembly, homodimer. Requires Fe(2+) as cofactor.

The catalysed reaction is L-ectoine + 2-oxoglutarate + O2 = 5-hydroxyectoine + succinate + CO2. Involved in the biosynthesis of 5-hydroxyectoine, called compatible solute, which helps organisms to survive extreme osmotic stress by acting as a highly soluble organic osmolyte. Catalyzes the 2-oxoglutarate-dependent selective hydroxylation of L-ectoine to yield (4S,5S)-5-hydroxyectoine. This Halomonas elongata (strain ATCC 33173 / DSM 2581 / NBRC 15536 / NCIMB 2198 / 1H9) protein is Ectoine dioxygenase.